The primary structure comprises 1037 residues: Probable inorganic carbon transporter subunit DabA 2 (1037 aa).

Zn(2+) contacts are provided by C460, D462, H719, and C734.

The protein belongs to the inorganic carbon transporter (TC 9.A.2) DabA family. As to quaternary structure, forms a complex with DabB. Zn(2+) is required as a cofactor.

It localises to the cell inner membrane. In terms of biological role, part of an energy-coupled inorganic carbon pump. The chain is Probable inorganic carbon transporter subunit DabA 2 from Nitrobacter winogradskyi (strain ATCC 25391 / DSM 10237 / CIP 104748 / NCIMB 11846 / Nb-255).